A 122-amino-acid polypeptide reads, in one-letter code: Toxin CSTX-1 (122 aa).

The first 20 residues, 1-20, serve as a signal peptide directing secretion; that stretch reads MKVLIISAVLFITIFSNISA. Residues 21 to 47 constitute a propeptide that is removed on maturation; the sequence is EIEDDFLEDESFEAEDIIPFFENEQAR. 4 cysteine pairs are disulfide-bonded: cysteine 49-cysteine 64, cysteine 56-cysteine 73, cysteine 63-cysteine 91, and cysteine 75-cysteine 89. The tract at residues 99–112 is predicted alpha-helix; it reads AIETGLNIFRGLFK. An Arginine amide; in CSTX-2a modification is found at arginine 108. Lysine 121 is modified (lysine amide; in omega-ctenitoxin-Cs1a).

The protein belongs to the neurotoxin 19 (CSTX) family. 04 (U1-Lctx) subfamily. In terms of assembly, monomer. Interacts with CSTX-13 (AC P83919) (Kd=430 nM), but does not interact with CSTX-9 (AC P58604). Expressed by the venom gland.

The protein localises to the secreted. It localises to the target cell membrane. Spider venom toxin that shows calcium channel blocking activity and exhibits cytolytic activity by affecting the outer leaflet curvature and/or pore formation across the membrane. It blocks L-type calcium channels (Cav1/CACNA1) in mammalian neurons at nanomolar concentrations. Furthermore, it produces a slow voltage-independent block of mid/low and high voltage-activated calcium channels in cockroach neurons. Potassium ions, histamine, M-ctenitoxin-Cs1a (AC P83619), CSTX-9 (AC P58604), and CSTX-13 (AC P83919) synergistically increase the insecticidal activity of this toxin. In vivo, it causes paralysis in blow flies and provokes death in drosophila. In terms of biological role, blocks voltage-activated calcium channels (Cav). Does not induce cell membrane permeability increase when tested on Xenopus oocytes. No alpha-helical structures are detectable. Is 7-fold less neurotoxic than omega-ctenitoxin-Cs1a on drosophila flies. Functionally, blocks voltage-activated calcium channels (Cav). Is 190-fold less neurotoxic than omega-ctenitoxin-Cs1a on drosophila flies. The sequence is that of Toxin CSTX-1 from Cupiennius salei (American wandering spider).